The following is a 560-amino-acid chain: Serine palmitoyltransferase 2 (560 aa).

Residues 65–85 (PMLVAVLTYVGYGVLTLFGYL) form a helical membrane-spanning segment. Residue Lys377 is modified to N6-(pyridoxal phosphate)lysine.

Belongs to the class-II pyridoxal-phosphate-dependent aminotransferase family. As to quaternary structure, component of the serine palmitoyltransferase (SPT) complex, which is composed of SPTLC1, SPTLC2 or SPTLC3 and SPTSSA or SPTSSB. The heterodimer consisting of SPTLC1 and SPTLC2/SPTLC3 forms the catalytic core of the enzyme, while SPTSSA or SPTSSB subunits determine substrate specificity. SPT also interacts with ORMDL proteins, especially ORMDL3, which negatively regulate SPT activity in the presence of ceramides. Forms dimers of heterodimers with SPTLC1. Requires pyridoxal 5'-phosphate as cofactor.

Its subcellular location is the endoplasmic reticulum membrane. It catalyses the reaction L-serine + hexadecanoyl-CoA + H(+) = 3-oxosphinganine + CO2 + CoA. The enzyme catalyses octadecanoyl-CoA + L-serine + H(+) = 3-oxoeicosasphinganine + CO2 + CoA. The protein operates within lipid metabolism; sphingolipid metabolism. Its activity is regulated as follows. SPT complex catalytic activity is negatively regulated by ORMDL proteins, including ORMDL3, in the presence of ceramides. This mechanism allows to maintain ceramide levels at sufficient concentrations for the production of complex sphingolipids, but which prevents the accumulation of ceramides to levels that trigger apoptosis. In terms of biological role, component of the serine palmitoyltransferase multisubunit enzyme (SPT) that catalyzes the initial and rate-limiting step in sphingolipid biosynthesis by condensing L-serine and activated acyl-CoA (most commonly palmitoyl-CoA) to form long-chain bases. The SPT complex is composed of SPTLC1, SPTLC2 or SPTLC3 and SPTSSA or SPTSSB. Within this complex, the heterodimer consisting of SPTLC1 and SPTLC2/SPTLC3 forms the catalytic core. The composition of the serine palmitoyltransferase (SPT) complex determines the substrate preference. The SPTLC1-SPTLC2-SPTSSA complex shows a strong preference for C16-CoA substrate, while the SPTLC1-SPTLC3-SPTSSA isozyme uses both C14-CoA and C16-CoA as substrates, with a slight preference for C14-CoA. The SPTLC1-SPTLC2-SPTSSB complex shows a strong preference for C18-CoA substrate, while the SPTLC1-SPTLC3-SPTSSB isozyme displays an ability to use a broader range of acyl-CoAs, without apparent preference. Crucial for adipogenesis. This Cricetulus griseus (Chinese hamster) protein is Serine palmitoyltransferase 2 (SPTLC2).